The following is a 270-amino-acid chain: Replication protein A 32 kDa subunit (270 aa).

An N-acetylmethionine modification is found at methionine 1. Residues serine 4 and serine 8 each carry the phosphoserine; by PRKDC modification. Residue threonine 21 is modified to Phosphothreonine; by PRKDC. The tract at residues 21–40 is disordered; sequence TQSPGGFGSPAPSQAEKKSR. Serine 23 bears the Phosphoserine; by CDK2 mark. Serine 29 carries the phosphoserine; by CDK1 modification. The residue at position 33 (serine 33) is a Phosphoserine; by PRKDC. Residues lysine 37 and lysine 38 each participate in a glycyl lysine isopeptide (Lys-Gly) (interchain with G-Cter in ubiquitin) cross-link. Positions 74 to 148 form a DNA-binding region, OB; it reads VTIVGIIRHA…KSLVAFKIMP (75 aa). The tract at residues 187-270 is interaction with RAD52, TIPIN, UNG and XPA; that stretch reads GMSEAGNFGG…DDHFKSTDAE (84 aa).

Belongs to the replication factor A protein 2 family. In terms of assembly, component of the replication protein A complex (RPA/RP-A), a heterotrimeric complex composed of RPA1, RPA2 and RPA3. Interacts with PRPF19; the PRP19-CDC5L complex is recruited to the sites of DNA repair where it ubiquitinates the replication protein A complex (RPA). Interacts with SERTAD3. Interacts with TIPIN. Interacts with TIMELESS. Interacts with PPP4R2; the interaction is direct, DNA damage-dependent and mediates the recruitment of the PP4 catalytic subunit PPP4C. Interacts (hyperphosphorylated) with RAD51. Interacts with SMARCAL1; the interaction is direct and mediates the recruitment to the RPA complex of SMARCAL1. Interacts with RAD52 and XPA; those interactions are direct and associate RAD52 and XPA to the RPA complex. Interacts with FBH1. Interacts with ETAA1; the interaction is direct and promotes ETAA1 recruitment at stalled replication forks. Interacts with DDI2. Interacts (in unphosphorylated form via N-terminus) with EIF4EBP3; the interaction enhances EIF4EBP3-mediated inhibition of EIF4E-mediated mRNA nuclear export. In terms of processing, differentially phosphorylated throughout the cell cycle, becoming phosphorylated at the G1-S transition and dephosphorylated in late mitosis. Mainly phosphorylated at Ser-23 and Ser-29, by cyclin A-CDK2 and cyclin B-CDK1, respectively during DNA replication and mitosis. Dephosphorylation may require the serine/threonine-protein phosphatase 4. Phosphorylation at Ser-23 and Ser-29 is a prerequisite for further phosphorylation. Becomes hyperphosphorylated on additional residues including Ser-4, Ser-8, Thr-21 and Ser-33 in response to DNA damage. Hyperphosphorylation is mediated by ATM, ATR and PRKDC. Primarily recruited to DNA repair nuclear foci as a hypophosphorylated form it undergoes subsequent hyperphosphorylation, catalyzed by ATR. Hyperphosphorylation is required for RAD51 recruitment to chromatin and efficient DNA repair. Phosphorylation at Thr-21 depends upon RFWD3 presence. DNA damage-induced 'Lys-63'-linked polyubiquitination by PRPF19 mediates ATRIP recruitment to the RPA complex at sites of DNA damage and activation of ATR. Ubiquitinated by RFWD3 at stalled replication forks in response to DNA damage: ubiquitination by RFWD3 does not lead to degradation by the proteasome and promotes removal of the RPA complex from stalled replication forks, promoting homologous recombination.

It is found in the nucleus. Its subcellular location is the PML body. In terms of biological role, as part of the heterotrimeric replication protein A complex (RPA/RP-A), binds and stabilizes single-stranded DNA intermediates, that form during DNA replication or upon DNA stress. It prevents their reannealing and in parallel, recruits and activates different proteins and complexes involved in DNA metabolism. Thereby, it plays an essential role both in DNA replication and the cellular response to DNA damage. In the cellular response to DNA damage, the RPA complex controls DNA repair and DNA damage checkpoint activation. Through recruitment of ATRIP activates the ATR kinase a master regulator of the DNA damage response. It is required for the recruitment of the DNA double-strand break repair factors RAD51 and RAD52 to chromatin in response to DNA damage. Also recruits to sites of DNA damage proteins like XPA and XPG that are involved in nucleotide excision repair and is required for this mechanism of DNA repair. Also plays a role in base excision repair (BER) probably through interaction with UNG. Also recruits SMARCAL1/HARP, which is involved in replication fork restart, to sites of DNA damage. May also play a role in telomere maintenance. The polypeptide is Replication protein A 32 kDa subunit (RPA2) (Pongo abelii (Sumatran orangutan)).